A 156-amino-acid chain; its full sequence is Movement protein P17 (156 aa).

Positions 38 to 54 are homodimerization; it reads AEDVEEEAIAAQEELEF. An RNA-binding region spans residues 57 to 156; that stretch reads DEAQARHSCL…RAAPKLIKRG (100 aa). Phosphoserine occurs at positions 71, 79, 137, and 140. The interval 106–156 is disordered; it reads ASYFSSSARPLPPPPAPSLMSWTPIAKYHPSSPTSTSSKLRRAAPKLIKRG. Basic residues predominate over residues 144 to 156; the sequence is KLRRAAPKLIKRG.

This sequence belongs to the polerovirus movement protein family. Homodimer. Expressed as a nonphosphorylated 20kDa form and a phosphorylated 22kDa form. Phosphorylated by a host PKC-related kinase. Serine phosphorylation is required for plamodesma targeting.

It is found in the host cell junction. It localises to the host plasmodesma. Its subcellular location is the host chloroplast envelope. The protein resides in the host Golgi apparatus. The protein localises to the host mitochondrion outer membrane. In terms of biological role, together with movement protein P3a, facilitates long-distance movement of virions in host. Transports viral genome to neighboring plant cells directly through plasmosdesmata, without any budding. The movement protein allows efficient cell to cell propagation, by bypassing the host cell wall barrier. Binds ssRNA. This is Movement protein P17 from Solanum tuberosum (Potato).